The following is a 723-amino-acid chain: Probable G-protein coupled receptor 149 (723 aa).

Over 1–31 (MSVMPSNLSLNGTSFFAENHSIMDKPNEQRT) the chain is Extracellular. Asparagine 7, asparagine 11, and asparagine 19 each carry an N-linked (GlcNAc...) asparagine glycan. Residues 32–52 (LNVFLFCSTFIIAFTVLLGSI) traverse the membrane as a helical segment. At 53-69 (YSLVSLLKLQNKSTISM) the chain is on the cytoplasmic side. The helical transmembrane segment at 70 to 90 (IVTSLSIDDLISIVPVIIFML) threads the bilayer. Over 91–106 (TQWSSDALPQPLCTTS) the chain is Extracellular. Residues cysteine 103 and cysteine 181 are joined by a disulfide bond. Residues 107–127 (ALIYLFQGISSNLKGSLIVSY) form a helical membrane-spanning segment. Residues 128-148 (NFYSINKTETMNCSASKRRVS) are Cytoplasmic-facing. The helical transmembrane segment at 149–169 (MVWAILSIWIVSLLICILPLC) threads the bilayer. The Extracellular segment spans residues 170–188 (GWGKYIPTTWGCFTDHASS). The chain crosses the membrane as a helical span at residues 189 to 209 (YILFLFIVYSLCFCLLTVLSV). Residues 210 to 306 (PLTYQLLCSD…SFTVGFAQKR (97 aa)) are Cytoplasmic-facing. Residues 307 to 327 (FSLILALTKVILWLPMMIQMV) traverse the membrane as a helical segment. Residues 328–338 (VQHITGYQSFS) are Extracellular-facing. The chain crosses the membrane as a helical span at residues 339 to 359 (FETLSFLLTLLAATVTPVFVL). At 360–723 (SEHWIHLPCG…RKREEDGNSN (364 aa)) the chain is on the cytoplasmic side. The tract at residues 451 to 513 (TTDSARPGPA…ERRLSHEEGH (63 aa)) is disordered. Residues 501-513 (EGPERRLSHEEGH) show a composition bias toward basic and acidic residues.

The protein belongs to the G-protein coupled receptor 1 family. In terms of tissue distribution, specific expression in peripheral nervous system, including nerve growth factor-dependent sensory and sympathetic neurons, as well as enteric neurons.

It localises to the cell membrane. Its function is as follows. Orphan receptor. This Gallus gallus (Chicken) protein is Probable G-protein coupled receptor 149 (GPR149).